A 100-amino-acid polypeptide reads, in one-letter code: Urease subunit gamma (100 aa).

This sequence belongs to the urease gamma subunit family. Heterotrimer of UreA (gamma), UreB (beta) and UreC (alpha) subunits. Three heterotrimers associate to form the active enzyme.

It localises to the cytoplasm. The enzyme catalyses urea + 2 H2O + H(+) = hydrogencarbonate + 2 NH4(+). It functions in the pathway nitrogen metabolism; urea degradation; CO(2) and NH(3) from urea (urease route): step 1/1. The chain is Urease subunit gamma from Pseudoalteromonas translucida (strain TAC 125).